Here is a 128-residue protein sequence, read N- to C-terminus: Large ribosomal subunit protein bL12 (128 aa).

Belongs to the bacterial ribosomal protein bL12 family. As to quaternary structure, homodimer. Part of the ribosomal stalk of the 50S ribosomal subunit. Forms a multimeric L10(L12)X complex, where L10 forms an elongated spine to which 2 to 4 L12 dimers bind in a sequential fashion. Binds GTP-bound translation factors.

In terms of biological role, forms part of the ribosomal stalk which helps the ribosome interact with GTP-bound translation factors. Is thus essential for accurate translation. The sequence is that of Large ribosomal subunit protein bL12 from Kosmotoga olearia (strain ATCC BAA-1733 / DSM 21960 / TBF 19.5.1).